We begin with the raw amino-acid sequence, 668 residues long: tRNA 5-methylaminomethyl-2-thiouridine biosynthesis bifunctional protein MnmC (668 aa).

The segment at 1–245 (MKHYSIQPAN…KREMLCGVME (245 aa)) is tRNA (mnm(5)s(2)U34)-methyltransferase. The tract at residues 270 to 668 (IGGGIASALL…LLKGKAVKAG (399 aa)) is FAD-dependent cmnm(5)s(2)U34 oxidoreductase.

This sequence in the N-terminal section; belongs to the methyltransferase superfamily. tRNA (mnm(5)s(2)U34)-methyltransferase family. In the C-terminal section; belongs to the DAO family. The cofactor is FAD.

The protein localises to the cytoplasm. It carries out the reaction 5-aminomethyl-2-thiouridine(34) in tRNA + S-adenosyl-L-methionine = 5-methylaminomethyl-2-thiouridine(34) in tRNA + S-adenosyl-L-homocysteine + H(+). Catalyzes the last two steps in the biosynthesis of 5-methylaminomethyl-2-thiouridine (mnm(5)s(2)U) at the wobble position (U34) in tRNA. Catalyzes the FAD-dependent demodification of cmnm(5)s(2)U34 to nm(5)s(2)U34, followed by the transfer of a methyl group from S-adenosyl-L-methionine to nm(5)s(2)U34, to form mnm(5)s(2)U34. The sequence is that of tRNA 5-methylaminomethyl-2-thiouridine biosynthesis bifunctional protein MnmC from Shigella flexneri serotype 5b (strain 8401).